Reading from the N-terminus, the 477-residue chain is Acylamidase (477 aa).

Residues lysine 82 and serine 157 each act as charge relay system in the active site. Serine 181 functions as the Acyl-ester intermediate in the catalytic mechanism.

It belongs to the amidase family.

It catalyses the reaction a monocarboxylic acid amide + H2O = a monocarboxylate + NH4(+). The enzyme catalyses an anilide + H2O = aniline + a carboxylate + H(+). The catalysed reaction is an N-acyl-L-amino acid + H2O = an L-alpha-amino acid + a carboxylate. It carries out the reaction an N-acetyl-L-cysteine-S-conjugate + H2O = an S-substituted L-cysteine + acetate. With respect to regulation, amidase activity is completely suppressed by inhibitors of serine proteases (phenylmethylsulfonyl fluoride and diisopropyl fluorophosphate), partially inhibited by copper and mercury ions, but is not affected by inhibitors of aliphatic amidases (acetaldehyde and nitrophenyl disulfides) or by EDTA. Functionally, amidase with broad substrate specificity, catalyzing the hydrolysis of a wide range of N-substituted amides, and, to a lesser extent, the hydrolysis of non-substituted amides. Acid para-nitroanilides (4'-nitroacetanilide, Gly-pNA, Ala-pNA, Leu-pNA) are the best substrates for this enzyme. N-substituted acrylamides (isopropyl acrylamide, N,N-dimethyl-aminopropyl acrylamide, and methylene-bis-acrylamide), N-acetyl derivatives of glycine, alanine and leucine, and aliphatic amides (acetamide, acrylamide, isobutyramide, n-butyramide, and valeramide) can also be used as substrates but with less efficiency. This Rhodococcus erythropolis (Arthrobacter picolinophilus) protein is Acylamidase.